Here is a 459-residue protein sequence, read N- to C-terminus: MTSVAGSSVTSAFIDLATYDTIEKHLYGGDSAVAYFVRETKKCTWFSKLPVLLTRCSGSPNFDQEFSVNVSRGGDYVLNSWMTVRIPAIKLKADNRMNNNGTIRWCKNLFHNLIKQTSVQFNDLVAQKFESYFLDYWAAFSMCGSKRAGYNNMIGNTIDMIQPVDHTGMLPEKVLVLPLPYFFSRDSGVALPSAALPYNEIRLTFHLRDYTELLIFQHKQDCTIIPITAADLEYGKPDLKDVQVWITNAVVTNEERRLMGTTPRDILVEQVQTAPKHVFQPLTIPSPNFDIRFSHAIKLLFFGVRNTTHAAVQSNYTTASPVILEEAYASDLSLVAADPIANVTLVYENSARLNEMGSEYYSLVQPYYFGGSIPIETGYHMYCYSLNMMDMDPMGSTNYGRLSNVSMKLKTSDKAVVNAGGGGGNMSGYKDAQKFEFLTMAINHNVIRIKNGSMGFPVL.

This sequence belongs to the NCLDV major capsid protein family. Homotrimer.

The protein resides in the virion. In terms of biological role, major capsid protein that self assembles to form an icosahedral capsid. Represents around 50% of the total virion protein mass. The polypeptide is Major capsid protein (MCP) (Pleuronectoidei (LCDV-1)).